A 288-amino-acid polypeptide reads, in one-letter code: Ankyrin repeat and SOCS box protein 8 (288 aa).

Ser17 is modified (phosphoserine). ANK repeat units lie at residues 52–81 (GTLKPLHCACMVSDADCVELLLEKGAEVNA), 85–113 (YNRTALHYAAEKDEACVEVLLEYGANPNA), 117–146 (NRDTPLHWAAFKNNAECVRALLESGASVNA), and 150–179 (NNDTPLSWAAMKGNLESVSILLDYGAEVRV). In terms of domain architecture, SOCS box spans 235–288 (QLCEKLTVLCSAPGTLKTLARYAVRRSLGLQYLPDAVKGLPLPASLKEYLLLLE).

It belongs to the ankyrin SOCS box (ASB) family. In terms of assembly, interacts with TBK1; this interaction promotes TBK1 proteasomal degradation. Post-translationally, phosphorylated by TBK1. In terms of tissue distribution, highest level of expression in skeletal muscle. Also expressed in heart, brain, placenta, liver, kidney and pancreas.

Its subcellular location is the cytoplasm. The protein operates within protein modification; protein ubiquitination. Functionally, may be a substrate-recognition component of a SCF-like ECS (Elongin-Cullin-SOCS-box protein) E3 ubiquitin-protein ligase complex which mediates the ubiquitination and subsequent proteasomal degradation of target proteins. Inhibits IFN-beta production through the IRF3 signaling pathway by targeting TBK1 via 'Lys-48'-linked ubiquitination, leading to its proteasomal degradation. In Homo sapiens (Human), this protein is Ankyrin repeat and SOCS box protein 8 (ASB8).